The chain runs to 310 residues: Glutarate 2-hydroxylase (310 aa).

Residues H160, D162, and H277 each coordinate Fe cation.

Belongs to the glutarate hydroxylase family. As to quaternary structure, homotetramer. The cofactor is Fe(2+).

It catalyses the reaction glutarate + 2-oxoglutarate + O2 = (S)-2-hydroxyglutarate + succinate + CO2. Its pathway is amino-acid degradation. Functionally, acts as an alpha-ketoglutarate-dependent dioxygenase catalyzing hydroxylation of glutarate (GA) to L-2-hydroxyglutarate (L2HG). Functions in a L-lysine degradation pathway that proceeds via cadaverine, glutarate and L-2-hydroxyglutarate. In Shigella flexneri, this protein is Glutarate 2-hydroxylase.